A 302-amino-acid polypeptide reads, in one-letter code: Ornithine carbamoyltransferase (302 aa).

Residues 52 to 55, glutamine 79, arginine 103, and 130 to 133 each bind carbamoyl phosphate; these read STRT and HPCQ. L-ornithine contacts are provided by residues asparagine 161, aspartate 222, and 226–227; that span reads SM. Carbamoyl phosphate is bound by residues 262 to 263 and arginine 290; that span reads CL.

Belongs to the aspartate/ornithine carbamoyltransferase superfamily. OTCase family.

Its subcellular location is the cytoplasm. It carries out the reaction carbamoyl phosphate + L-ornithine = L-citrulline + phosphate + H(+). It participates in amino-acid biosynthesis; L-arginine biosynthesis; L-arginine from L-ornithine and carbamoyl phosphate: step 1/3. Reversibly catalyzes the transfer of the carbamoyl group from carbamoyl phosphate (CP) to the N(epsilon) atom of ornithine (ORN) to produce L-citrulline. This chain is Ornithine carbamoyltransferase, found in Syntrophus aciditrophicus (strain SB).